A 132-amino-acid polypeptide reads, in one-letter code: DNA-directed RNA polymerase subunit omega (132 aa).

A disordered region spans residues 100 to 119; that stretch reads VSAEEEASHGTAGMSAEELE.

Belongs to the RNA polymerase subunit omega family. In terms of assembly, the RNAP catalytic core consists of 2 alpha, 1 beta, 1 beta' and 1 omega subunit. When a sigma factor is associated with the core the holoenzyme is formed, which can initiate transcription.

It carries out the reaction RNA(n) + a ribonucleoside 5'-triphosphate = RNA(n+1) + diphosphate. Promotes RNA polymerase assembly. Latches the N- and C-terminal regions of the beta' subunit thereby facilitating its interaction with the beta and alpha subunits. The sequence is that of DNA-directed RNA polymerase subunit omega from Gluconacetobacter diazotrophicus (strain ATCC 49037 / DSM 5601 / CCUG 37298 / CIP 103539 / LMG 7603 / PAl5).